A 332-amino-acid polypeptide reads, in one-letter code: Glycerol-3-phosphate dehydrogenase [NAD(P)+] (332 aa).

Residues tryptophan 11, arginine 30, and lysine 108 each contribute to the NADPH site. Positions 108, 137, and 139 each coordinate sn-glycerol 3-phosphate. Residue alanine 141 coordinates NADPH. Sn-glycerol 3-phosphate contacts are provided by lysine 192, aspartate 245, serine 255, arginine 256, and asparagine 257. The active-site Proton acceptor is the lysine 192. Position 256 (arginine 256) interacts with NADPH. Positions 280 and 282 each coordinate NADPH.

Belongs to the NAD-dependent glycerol-3-phosphate dehydrogenase family.

It is found in the cytoplasm. The enzyme catalyses sn-glycerol 3-phosphate + NAD(+) = dihydroxyacetone phosphate + NADH + H(+). It carries out the reaction sn-glycerol 3-phosphate + NADP(+) = dihydroxyacetone phosphate + NADPH + H(+). The protein operates within membrane lipid metabolism; glycerophospholipid metabolism. Catalyzes the reduction of the glycolytic intermediate dihydroxyacetone phosphate (DHAP) to sn-glycerol 3-phosphate (G3P), the key precursor for phospholipid synthesis. The protein is Glycerol-3-phosphate dehydrogenase [NAD(P)+] of Burkholderia orbicola (strain AU 1054).